We begin with the raw amino-acid sequence, 86 residues long: Exodeoxyribonuclease 7 small subunit (86 aa).

Positions Arg67 to Arg86 are disordered.

The protein belongs to the XseB family. As to quaternary structure, heterooligomer composed of large and small subunits.

The protein localises to the cytoplasm. The enzyme catalyses Exonucleolytic cleavage in either 5'- to 3'- or 3'- to 5'-direction to yield nucleoside 5'-phosphates.. Its function is as follows. Bidirectionally degrades single-stranded DNA into large acid-insoluble oligonucleotides, which are then degraded further into small acid-soluble oligonucleotides. The protein is Exodeoxyribonuclease 7 small subunit of Beutenbergia cavernae (strain ATCC BAA-8 / DSM 12333 / CCUG 43141 / JCM 11478 / NBRC 16432 / NCIMB 13614 / HKI 0122).